Reading from the N-terminus, the 263-residue chain is Translation initiation factor 2 subunit alpha (263 aa).

One can recognise an S1 motif domain in the interval 12 to 83; sequence GEILIATVKQ…RKGTIDVSLK (72 aa).

This sequence belongs to the eIF-2-alpha family. Heterotrimer composed of an alpha, a beta and a gamma chain.

Its function is as follows. eIF-2 functions in the early steps of protein synthesis by forming a ternary complex with GTP and initiator tRNA. This Sulfurisphaera tokodaii (strain DSM 16993 / JCM 10545 / NBRC 100140 / 7) (Sulfolobus tokodaii) protein is Translation initiation factor 2 subunit alpha.